Here is a 317-residue protein sequence, read N- to C-terminus: Beta-ketoacyl-[acyl-carrier-protein] synthase III (317 aa).

Active-site residues include Cys112 and His244. An ACP-binding region spans residues 245-249 (QANLR). Asn274 is an active-site residue.

This sequence belongs to the thiolase-like superfamily. FabH family. Homodimer.

The protein localises to the cytoplasm. The catalysed reaction is malonyl-[ACP] + acetyl-CoA + H(+) = 3-oxobutanoyl-[ACP] + CO2 + CoA. The protein operates within lipid metabolism; fatty acid biosynthesis. Functionally, catalyzes the condensation reaction of fatty acid synthesis by the addition to an acyl acceptor of two carbons from malonyl-ACP. Catalyzes the first condensation reaction which initiates fatty acid synthesis and may therefore play a role in governing the total rate of fatty acid production. Possesses both acetoacetyl-ACP synthase and acetyl transacylase activities. Its substrate specificity determines the biosynthesis of branched-chain and/or straight-chain of fatty acids. The sequence is that of Beta-ketoacyl-[acyl-carrier-protein] synthase III from Salmonella arizonae (strain ATCC BAA-731 / CDC346-86 / RSK2980).